The following is a 98-amino-acid chain: NADH-ubiquinone oxidoreductase chain 4L (98 aa).

3 consecutive transmembrane segments (helical) span residues 1 to 21 (MASI…GVLI), 26 to 46 (LMST…MMTL), and 59 to 79 (APLI…ALLV).

This sequence belongs to the complex I subunit 4L family. In terms of assembly, core subunit of respiratory chain NADH dehydrogenase (Complex I) which is composed of 45 different subunits.

The protein localises to the mitochondrion inner membrane. It catalyses the reaction a ubiquinone + NADH + 5 H(+)(in) = a ubiquinol + NAD(+) + 4 H(+)(out). Functionally, core subunit of the mitochondrial membrane respiratory chain NADH dehydrogenase (Complex I) which catalyzes electron transfer from NADH through the respiratory chain, using ubiquinone as an electron acceptor. Part of the enzyme membrane arm which is embedded in the lipid bilayer and involved in proton translocation. The polypeptide is NADH-ubiquinone oxidoreductase chain 4L (MT-ND4L) (Caenolestes fuliginosus (Shrew opossum)).